The primary structure comprises 209 residues: Large ribosomal subunit protein uL3 (209 aa).

Glutamine 150 is subject to N5-methylglutamine.

This sequence belongs to the universal ribosomal protein uL3 family. As to quaternary structure, part of the 50S ribosomal subunit. Forms a cluster with proteins L14 and L19. Methylated by PrmB.

In terms of biological role, one of the primary rRNA binding proteins, it binds directly near the 3'-end of the 23S rRNA, where it nucleates assembly of the 50S subunit. The polypeptide is Large ribosomal subunit protein uL3 (Salmonella paratyphi C (strain RKS4594)).